A 215-amino-acid chain; its full sequence is Cytochrome b6 (215 aa).

The chain crosses the membrane as a helical span at residues 32–52 (IFYCLGGITLTCFLIQFATGF). Cys35 lines the heme c pocket. The heme b site is built by His86 and His100. 3 consecutive transmembrane segments (helical) span residues 90–110 (ASMM…TGGF), 116–136 (LTWV…VTGY), and 186–206 (LHTF…FLMI). Positions 187 and 202 each coordinate heme b.

This sequence belongs to the cytochrome b family. PetB subfamily. The 4 large subunits of the cytochrome b6-f complex are cytochrome b6, subunit IV (17 kDa polypeptide, PetD), cytochrome f and the Rieske protein, while the 4 small subunits are PetG, PetL, PetM and PetN. The complex functions as a dimer. Heme b serves as cofactor. Requires heme c as cofactor.

The protein localises to the cellular thylakoid membrane. In terms of biological role, component of the cytochrome b6-f complex, which mediates electron transfer between photosystem II (PSII) and photosystem I (PSI), cyclic electron flow around PSI, and state transitions. The polypeptide is Cytochrome b6 (Synechococcus elongatus (strain ATCC 33912 / PCC 7942 / FACHB-805) (Anacystis nidulans R2)).